A 315-amino-acid chain; its full sequence is Protein TIFY 4B (315 aa).

The tract at residues 113 to 145 (CHRRDSPRSAEFSGSSGQFVADKDSHKTVSVSP) is disordered. Positions 151 to 186 (TNAVVGQMTIFYSGKVNVYDGVPPEKARSIMHFAAN) constitute a Tify domain. Residues 233–260 (QANRKVSLQRYLEKRKDRRFSKTKKAPG) carry the Jas motif. The short motif at 235-242 (NRKVSLQR) is the Nuclear localization signal element. Positions 248 to 257 (KDRRFSKTKK) are enriched in basic residues. The disordered stretch occupies residues 248 to 315 (KDRRFSKTKK…LNSDLNSEDN (68 aa)). Polar residues predominate over residues 293-315 (PENQTKSPNISVDLNSDLNSEDN).

The protein belongs to the TIFY/JAZ family. Interacts with AFPH2/NINJA.

Its subcellular location is the nucleus. In terms of biological role, regulates the arrest of dispersed meristematic cells during lamina development. The sequence is that of Protein TIFY 4B (TIFY4B) from Arabidopsis thaliana (Mouse-ear cress).